The chain runs to 374 residues: Multicilin (374 aa).

Positions glutamate 164–leucine 212 form a coiled coil. A disordered region spans residues arginine 230–serine 260. A TIRT domain region spans residues threonine 330–asparagine 374.

It belongs to the geminin family. Component of the EDM complex, at least composed of e2f4, e2f5, mcidas and tfdp1. As to expression, expressed in multiciliate differentiating cells. Expression is lost by stage 26, when multiciliate cells in the skin are fully differentiated, but is then detected in the developing nephrostomes of the kidneys where multiciliate cells form at later stages.

It localises to the nucleus. Transcription regulator specifically required for multiciliate cell differentiation. Acts in a multiprotein complex containing E2F4 and E2F5 that binds and activates genes required for centriole biogenesis. Activates genes required for centriole assembly (plk4, cep152) and genes specifically required for motile cilia formation (foxj1). Also promotes the deuterosome pathway of centriole biogenesis by activating expression of ccdc67/deup1, but not its paralog cep63. The chain is Multicilin (mcidas) from Xenopus laevis (African clawed frog).